Consider the following 276-residue polypeptide: Large ribosomal subunit protein uL2 (276 aa).

Disordered stretches follow at residues 34-55 and 221-276; these read LQPL…RHQG and RGSV…RRTK. The segment covering 37–48 has biased composition (polar residues); sequence LKNNAGRNNNGR.

Belongs to the universal ribosomal protein uL2 family. As to quaternary structure, part of the 50S ribosomal subunit. Forms a bridge to the 30S subunit in the 70S ribosome.

Its function is as follows. One of the primary rRNA binding proteins. Required for association of the 30S and 50S subunits to form the 70S ribosome, for tRNA binding and peptide bond formation. It has been suggested to have peptidyltransferase activity; this is somewhat controversial. Makes several contacts with the 16S rRNA in the 70S ribosome. This Enterococcus faecalis (strain ATCC 700802 / V583) protein is Large ribosomal subunit protein uL2.